We begin with the raw amino-acid sequence, 577 residues long: MQHSLRSDLLPTKTSPRSHLLPQPKNANISRRILINPFKIPTLPDLTSPVPSPVKLKPTYPNLNLLQKLAATMLDKIESSIVIPMEQNRPLPKPTDPAVQLSGNFAPVNECPVQNGLEVVGQIPSCLKGVYIRNGANPMFPPLAGHHLFDGDGMIHAVSIGFDNQVSYSCRYTKTNRLVQETALGRSVFPKPIGELHGHSGLARLALFTARAGIGLVDGTRGMGVANAGVVFFNGRLLAMSEDDLPYQVKIDGQGDLETIGRFGFDDQIDSSVIAHPKVDATTGDLHTLSYNVLKKPHLRYLKFNTCGKKTRDVEITLPEPTMIHDFAITENFVVIPDQQMVFKLSEMIRGGSPVIYVKEKMARFGVLSKQDLTGSDINWVDVPDCFCFHLWNAWEERTEEGDPVIVVIGSCMSPPDTIFSESGEPTRVELSEIRLNMRTKESNRKVIVTGVNLEAGHINRSYVGRKSQFVYIAIADPWPKCSGIAKVDIQNGTVSEFNYGPSRFGGEPCFVPEGEGEEDKGYVMGFVRDEEKDESEFVVVDATDMKQVAAVRLPERVPYGFHGTFVSENQLKEQVF.

Residues 1-25 (MQHSLRSDLLPTKTSPRSHLLPQPK) are disordered. Positions 276, 325, 390, and 563 each coordinate Fe cation.

This sequence belongs to the carotenoid oxygenase family. The cofactor is Fe(2+). Expressed before fertilization in male and female gametophytes, and then immediately after pollination, restricted to seed endosperm.

Its subcellular location is the plastid. It is found in the chloroplast stroma. It carries out the reaction a 9-cis-epoxycarotenoid + O2 = a 12'-apo-carotenal + 2-cis,4-trans-xanthoxin. The enzyme catalyses 9-cis-violaxanthin + O2 = (3S,5R,6S)-5,6-epoxy-3-hydroxy-5,6-dihydro-12'-apo-beta-caroten-12'-al + 2-cis,4-trans-xanthoxin. It catalyses the reaction 9'-cis-neoxanthin + O2 = (3S,5R,6R)-3,5-dihydroxy-6,7-didehydro-5,6-dihydro-12'-apo-beta-caroten-12'-al + 2-cis,4-trans-xanthoxin. In terms of biological role, has a 11,12(11',12') 9-cis epoxycarotenoid cleavage activity. Catalyzes the first step of abscisic-acid biosynthesis from carotenoids. Contributes probably to abscisic acid synthesis for the induction of seed dormancy. The polypeptide is 9-cis-epoxycarotenoid dioxygenase NCED6, chloroplastic (NCED6) (Arabidopsis thaliana (Mouse-ear cress)).